Here is a 239-residue protein sequence, read N- to C-terminus: Small ribosomal subunit protein uS3 (239 aa).

The region spanning 39 to 107 (IREFIKEECK…ELHLNIVEVR (69 aa)) is the KH type-2 domain. Basic and acidic residues predominate over residues 212 to 221 (PQARDRKAQE). Residues 212–239 (PQARDRKAQELQDGPAPRGAGGNRRGDR) form a disordered region. Residues 230–239 (GAGGNRRGDR) show a composition bias toward gly residues.

This sequence belongs to the universal ribosomal protein uS3 family. In terms of assembly, part of the 30S ribosomal subunit. Forms a tight complex with proteins S10 and S14.

Functionally, binds the lower part of the 30S subunit head. Binds mRNA in the 70S ribosome, positioning it for translation. This is Small ribosomal subunit protein uS3 from Ruegeria sp. (strain TM1040) (Silicibacter sp.).